Reading from the N-terminus, the 444-residue chain is ATPase PAAT (444 aa).

Phosphoserine occurs at positions 177, 182, and 254. Residues 279–300 (SAQPSGEGNTTNHDEGHLMPQN) are disordered. Over residues 280-289 (AQPSGEGNTT) the composition is skewed to polar residues. The residue at position 302 (Ser-302) is a Phosphoserine. A disordered region spans residues 424–444 (PPPGMPLRHYDSRERLSNGER). Basic and acidic residues predominate over residues 431–444 (RHYDSRERLSNGER).

As to quaternary structure, homodimer. Interacts with ABCB7, ABCB8/MITOSUR and ABCB10.

It localises to the cytoplasm. The protein resides in the mitochondrion. The catalysed reaction is ATP + H2O = ADP + phosphate + H(+). In terms of biological role, ATPase that regulates mitochondrial ABC transporters ABCB7, ABCB8/MITOSUR and ABCB10. Regulates mitochondrial ferric concentration and heme biosynthesis and plays a role in the maintenance of mitochondrial homeostasis and cell survival. This Mus musculus (Mouse) protein is ATPase PAAT.